The sequence spans 120 residues: Large ribosomal subunit protein uL18 (120 aa).

This sequence belongs to the universal ribosomal protein uL18 family. Part of the 50S ribosomal subunit; part of the 5S rRNA/L5/L18/L25 subcomplex. Contacts the 5S and 23S rRNAs.

In terms of biological role, this is one of the proteins that bind and probably mediate the attachment of the 5S RNA into the large ribosomal subunit, where it forms part of the central protuberance. The chain is Large ribosomal subunit protein uL18 from Sinorhizobium medicae (strain WSM419) (Ensifer medicae).